A 113-amino-acid chain; its full sequence is U11-theraphotoxin-Hhn1a (113 aa).

The first 21 residues, 1–21, serve as a signal peptide directing secretion; that stretch reads MNTVRVTFLLVFVLAVSLGQA. The propeptide occupies 22-74; sequence DKDENRMEMQKKTEQGKSYLDFAENLLLQKLEELEAKLLEEDSEESRNSRQKR. Intrachain disulfides connect C75/C90, C82/C95, and C89/C110.

The protein belongs to the neurotoxin 14 (magi-1) family. 01 (HNTX-16) subfamily. Expressed by the venom gland.

The protein localises to the secreted. Probable ion channel inhibitor. The polypeptide is U11-theraphotoxin-Hhn1a (Cyriopagopus hainanus (Chinese bird spider)).